Here is a 248-residue protein sequence, read N- to C-terminus: GPN-loop GTPase PAB0955 (248 aa).

Residue 10 to 15 (GSGKTT) participates in GTP binding. Residues 65–67 (GPN) carry the Gly-Pro-Asn (GPN)-loop; involved in dimer interface motif. GTP-binding positions include 165–168 (NKVD) and Ala-224.

The protein belongs to the GPN-loop GTPase family. In terms of assembly, homodimer. Interacts with DNA topoisomerase VI subunit B (top6B), DNA primase DnaG and RF-C.

In terms of biological role, small GTPase that may be involved in genome maintenance. Has weak intrinsic GTPase activity but displays no ATPase activity. This Pyrococcus abyssi (strain GE5 / Orsay) protein is GPN-loop GTPase PAB0955.